The sequence spans 133 residues: L-cystatin (133 aa).

The signal sequence occupies residues 1–19; it reads MEGYNILAVLIILVGVSMG. Residue glutamine 20 is modified to Pyrrolidone carboxylic acid. The short motif at 67–71 is the Secondary area of contact element; that stretch reads QVVSG. Intrachain disulfides connect cysteine 85–cysteine 98 and cysteine 109–cysteine 129.

This sequence belongs to the cystatin family. In terms of tissue distribution, expressed in hemocytes and slightly in heart.

It localises to the cytoplasmic granule. Functionally, tight-binding inhibitor for papain. It has an important role in the protection of cells, antimicrobial activity against Gram-negative bacteria, defense against invading microbes, and response to external stimuli. The chain is L-cystatin from Tachypleus tridentatus (Japanese horseshoe crab).